Here is a 243-residue protein sequence, read N- to C-terminus: 1-(5-phosphoribosyl)-5-[(5-phosphoribosylamino)methylideneamino] imidazole-4-carboxamide isomerase (243 aa).

Residue Asp17 is the Proton acceptor of the active site. The Proton donor role is filled by Asp138.

This sequence belongs to the HisA/HisF family.

The protein localises to the cytoplasm. The catalysed reaction is 1-(5-phospho-beta-D-ribosyl)-5-[(5-phospho-beta-D-ribosylamino)methylideneamino]imidazole-4-carboxamide = 5-[(5-phospho-1-deoxy-D-ribulos-1-ylimino)methylamino]-1-(5-phospho-beta-D-ribosyl)imidazole-4-carboxamide. The protein operates within amino-acid biosynthesis; L-histidine biosynthesis; L-histidine from 5-phospho-alpha-D-ribose 1-diphosphate: step 4/9. In Deinococcus geothermalis (strain DSM 11300 / CIP 105573 / AG-3a), this protein is 1-(5-phosphoribosyl)-5-[(5-phosphoribosylamino)methylideneamino] imidazole-4-carboxamide isomerase.